Reading from the N-terminus, the 102-residue chain is NADH-quinone oxidoreductase subunit K (102 aa).

The next 3 membrane-spanning stretches (helical) occupy residues 4 to 24 (IPME…LVGL), 30 to 50 (MLFV…AFIV), and 62 to 82 (VMFL…LALL).

This sequence belongs to the complex I subunit 4L family. As to quaternary structure, NDH-1 is composed of 14 different subunits. Subunits NuoA, H, J, K, L, M, N constitute the membrane sector of the complex.

The protein localises to the cell inner membrane. The enzyme catalyses a quinone + NADH + 5 H(+)(in) = a quinol + NAD(+) + 4 H(+)(out). In terms of biological role, NDH-1 shuttles electrons from NADH, via FMN and iron-sulfur (Fe-S) centers, to quinones in the respiratory chain. The immediate electron acceptor for the enzyme in this species is believed to be ubiquinone. Couples the redox reaction to proton translocation (for every two electrons transferred, four hydrogen ions are translocated across the cytoplasmic membrane), and thus conserves the redox energy in a proton gradient. The sequence is that of NADH-quinone oxidoreductase subunit K from Chromohalobacter salexigens (strain ATCC BAA-138 / DSM 3043 / CIP 106854 / NCIMB 13768 / 1H11).